We begin with the raw amino-acid sequence, 1295 residues long: MRVLLILLAFFAPIASQLMGGECGREGACSVNGKCYNGKLIETYWCRCKKGFGGAFCERECDLDCKRGEKCIYDVYGENPTCICQDCEDETPPTERTQKGCEEGYGGPDCKTPLFSGVNPCDSDPCNNGLCYPFYGGFQCICNNGYGGSYCEEGIDHCAQNECAEGSTCVNSVYNYYCDCPIGKSGRYCERTECALMGNICNHGRCIPNRDEDKNFRCVCDSGYEGEFCNKDKNECLIEETCVNNSTCFNLHGDFTCTCKPGYAGKYCEEAIDMCKDYVCQNDGYCAHDSNQMPICYCEQGFTGQRCEIECPSGFGGIHCDLPLQRPHCSRSNGTCYNDGRCINGFCVCEPDYIGDRCEINRKDFKFPDIQSCKYNPCVNNATCIDLKNSGYSCHCPLGFYGLNCEQHLLCTPTTCANGGTCEGVNGVIRCNCPNGFSGDYCEIKDRQLCSRHPCKNGGVCKNTGYCECQYGYTGPTCEEVLVIEKSKETVIRDLCEQRKCMDLASNGICNPECNLEECNFDGGDCSGGQRPFSKCQYPARCADQFANGVCNQECNNEECLYDGLDCQSELFRCPAHIRKHCIERRGDGVCNLECSFIGCGFDGGDCNNGTEAIILSDIRIKVQIDPIEFQATGGETLMQISANLRATVRIQRDELGPLVFRWDGEHEMERVEMNSSKLEDQFVLSHHVRRYRQAVVTGIVLYLEVEEICKPEFCRFSTAQSVVDLIAAGLVKSDGRMSLGLPITEAMVAVPKRNEIDEGWSRSQVILFACIAFLAFGTVVAGVIAKNGPERSRKRKMVNATVWMPPMESTNEKGRRNQSNHSSQCSLLDNSAYYHPNTKRHCSDYSTGYNGEQYSQIYPQTLANGYPGDYNELNFDFQSETFAPADLPADEIPLHVQAAGPDAITAPITNESVNQVDSKYRRRVLHWLAANVRGKPEDVITTEAIRCLKAGADVNARDCDENTALMLAVRAHRVRLSVVLLREGANPTIFNNSERSALHEAVVNKDLRILRHLLTDKRLLKEIDELDRNGMTALMLVARELGKHQVEMAELLLSKGAKLDYDGAARKDSNKYKGRTALHYAAMHDNEEMVIMLVRRSSNKDKQDEDGRTPIMLAAKEGCEKTVQYLALNDASLGIVDSMDMTAAQVAEASYHHELAAFLRQVANERHRNDIMRQQIVKSGHGAKSGRQTVKNIKRAGSRKTPTSAASSRETNHLTPPPSDGSFSSPSPHYYPTTTSTPNRMETSPEYMFNHEMAPPVNAMWYTTPPPYQDPNYRHVPPNTAFQNAEQMNGSFYC.

An N-terminal signal peptide occupies residues 1–15 (MRVLLILLAFFAPIA). The Extracellular segment spans residues 16 to 764 (SQLMGGECGR…NEIDEGWSRS (749 aa)). 4 consecutive EGF-like domains span residues 19–58 (MGGE…AFCE), 117–152 (GVNP…SYCE), 154–190 (GIDH…RYCE), and 190–230 (ERTE…EFCN). Disulfide bonds link Cys23–Cys35, Cys29–Cys46, Cys48–Cys57, Cys121–Cys131, Cys126–Cys140, Cys142–Cys151, Cys158–Cys169, Cys163–Cys178, Cys180–Cys189, Cys201–Cys206, Cys220–Cys229, Cys236–Cys248, Cys242–Cys257, Cys259–Cys268, Cys275–Cys286, Cys280–Cys296, Cys298–Cys307, Cys329–Cys342, Cys336–Cys347, Cys349–Cys358, Cys373–Cys384, Cys378–Cys394, Cys396–Cys405, Cys411–Cys422, Cys416–Cys431, Cys433–Cys442, Cys450–Cys461, Cys455–Cys467, Cys469–Cys478, Cys496–Cys519, Cys501–Cys514, Cys510–Cys526, Cys536–Cys560, Cys542–Cys555, Cys551–Cys567, Cys582–Cys595, and Cys591–Cys607. In terms of domain architecture, EGF-like 5; calcium-binding spans 232-269 (DKNECLIEETCVNNSTCFNLHGDFTCTCKPGYAGKYCE). Asn244 and Asn245 each carry an N-linked (GlcNAc...) asparagine glycan. 5 consecutive EGF-like domains span residues 271–308 (AIDM…QRCE), 316–359 (GGIH…DRCE), 369–406 (DIQS…LNCE), 407–443 (QHLL…DYCE), and 446–479 (DRQL…PTCE). An N-linked (GlcNAc...) asparagine glycan is attached at Asn333. Residue Asn381 is glycosylated (N-linked (GlcNAc...) asparagine). LNR repeat units lie at residues 496 to 532 (CEQR…GQRP), 536 to 577 (CQYP…CPAH), and 581 to 612 (HCIE…NGTE). Asn609 and Asn675 each carry an N-linked (GlcNAc...) asparagine glycan. Residues 765 to 786 (QVILFACIAFLAFGTVVAGVIA) traverse the membrane as a helical segment. Residues 787 to 1295 (KNGPERSRKR…AEQMNGSFYC (509 aa)) are Cytoplasmic-facing. ANK repeat units lie at residues 961 to 990 (DENT…NPTI), 994 to 1023 (SERS…LLKE), 1030 to 1062 (NGMT…KLDY), 1074 to 1103 (KGRT…NKDK), and 1107 to 1136 (DGRT…SLGI). Positions 1177-1244 (IVKSGHGAKS…TTSTPNRMET (68 aa)) are disordered. Over residues 1201–1210 (KTPTSAASSR) the composition is skewed to polar residues. Positions 1221 to 1239 (DGSFSSPSPHYYPTTTSTP) are enriched in low complexity.

As to quaternary structure, interacts with sel-10. In terms of assembly, when activated, the glp-1/Notch intracellular domain (NICD) may become a component of a complex consisting of at least the NICD, lag-1 and lag-3. Upon binding its ligands, it is cleaved (S2 cleavage) in its extracellular domain, close to the transmembrane domain. S2 cleavage is probably mediated by the metalloproteases adm-4 and sup-17. It is then cleaved (S3 cleavage) downstream of its transmembrane domain, releasing it from the cell membrane; S3 cleavage requires a multiprotein gamma-secretase complex, which may include presenilin sel-12. As to expression, expressed in the distal mitotic region of the germ line. May be absent from the gonadal distal tip cell (DTC).

The protein resides in the cell membrane. It localises to the cell projection. The protein localises to the axon. Its subcellular location is the nucleus. In terms of biological role, essential signaling protein which has a major role in germline and embryonic development; involved in cell fate decisions that require cell-cell interactions. Probable membrane-bound receptor for putative ligands lag-2 and apx-1. Upon ligand activation, and releasing from the cell membrane, the glp-1/Notch intracellular domain (NICD) probably forms a transcriptional activator complex with lag-1 and lag-3 and regulates expression of various genes; targets in the germline include lst-1 and sygl-1. Involved in the specification of the cell fates of the blastomeres, ABa and ABp. Proper signaling by glp-1 induces ABa descendants to produce anterior pharyngeal cells, and ABp descendants to adopt a different fate. Contributes to the establishment of the dorsal-ventral axis in early embryos. Required in postmitotic neurons in order to maintain the developmentally arrested larval state known as dauer, probably in response to lag-2. Regulates germ cell mitotic proliferation probably by regulating MAP kinase phosphatase lip-1 expression. Required for oocyte growth control. Plays a negative role in lifespan. In Caenorhabditis elegans, this protein is Protein glp-1.